A 1435-amino-acid chain; its full sequence is Protein SPP41 (1435 aa).

Disordered stretches follow at residues 16-74 (VGNL…NIEI), 88-265 (VANA…ENTL), 286-309 (AKQTVDIQDNSHTDNTNNEDVEAQ), 322-424 (ELLS…DDEF), 442-482 (ETST…DSLD), 519-708 (SVSD…MKVP), and 934-972 (QQLDKQLPARSAGTEISSSESPDKATPDPHSNSTIAGHT). Residues 27–42 (GQEEGEVQGGEQEGDD) are compositionally biased toward acidic residues. 3 stretches are compositionally biased toward basic and acidic residues: residues 53-63 (IEPKHPDDSQH), 98-127 (EQAKPENHLENGSEHVTSDTADDNHEKEQQ), and 139-154 (LKSDGEPLRENTERRV). The UIM domain maps to 171 to 190 (QDDENLRMAILESLQELNTN). Basic and acidic residues predominate over residues 196-205 (EPEKHEHAAP). A compositionally biased stretch (basic residues) spans 211–223 (SKKSSKKKKKDKS). The span at 224 to 234 (KNRESSKDKSS) shows a compositional bias: basic and acidic residues. The span at 235–249 (KKSKSSSHSKKHAKD) shows a compositional bias: basic residues. Over residues 286–301 (AKQTVDIQDNSHTDNT) the composition is skewed to polar residues. Residues 345 to 355 (KAVEPPRKPTA) are compositionally biased toward basic and acidic residues. Basic residues predominate over residues 367-383 (KPKKRPPQEKKKTKSKT). Residues 384-398 (SKAASTANKSPASES) show a composition bias toward low complexity. 2 stretches are compositionally biased toward polar residues: residues 442–451 (ETSTHTATQD) and 459–482 (DFTSPVQSQYTTEDASTANDDSLD). 3 stretches are compositionally biased toward basic and acidic residues: residues 524–548 (LPHDNLSRMEKKSVPKSSSKSEKKT), 610–628 (KNKELKEKEKLERQTAREE), and 637–652 (KQRLAEEQEELKKIVE). Positions 665–674 (KSGKPKKPYR) are enriched in basic residues. Residues 676 to 691 (WTPEELLKRSQEAEKP) show a composition bias toward basic and acidic residues. The Nuclear localization signal signature appears at 683 to 699 (KRSQEAEKPRKVKKERK). Residues 692-706 (RKVKKERKKKEKKMK) show a composition bias toward basic residues. K981 is covalently cross-linked (Glycyl lysine isopeptide (Lys-Gly) (interchain with G-Cter in SUMO)). A compositionally biased stretch (basic and acidic residues) spans 1005-1014 (KLELTKRAES). The interval 1005–1125 (KLELTKRAES…DSVNTTTGKP (121 aa)) is disordered. Residue S1014 is modified to Phosphoserine. Residues 1021–1032 (NVETAKETQSVQ) show a composition bias toward polar residues. 2 stretches are compositionally biased toward basic and acidic residues: residues 1033 to 1082 (EIKE…EKIA) and 1091 to 1103 (LSDKKDGDEKSTL). S1067 is modified (phosphoserine). The segment covering 1108–1123 (AQLTGNEPDSVNTTTG) has biased composition (polar residues). Residue K1154 forms a Glycyl lysine isopeptide (Lys-Gly) (interchain with G-Cter in SUMO) linkage.

In terms of assembly, interacts with PRP8 and RAP1.

The protein resides in the nucleus. Its function is as follows. Negative regulator of PRP3 and PRP4 genes. This Saccharomyces cerevisiae (strain ATCC 204508 / S288c) (Baker's yeast) protein is Protein SPP41 (SPP41).